The sequence spans 513 residues: ATP synthase subunit alpha (513 aa).

Residue 172–179 (GDRQTGKT) coordinates ATP.

Belongs to the ATPase alpha/beta chains family. F-type ATPases have 2 components, CF(1) - the catalytic core - and CF(0) - the membrane proton channel. CF(1) has five subunits: alpha(3), beta(3), gamma(1), delta(1), epsilon(1). CF(0) has three main subunits: a(1), b(2) and c(9-12). The alpha and beta chains form an alternating ring which encloses part of the gamma chain. CF(1) is attached to CF(0) by a central stalk formed by the gamma and epsilon chains, while a peripheral stalk is formed by the delta and b chains.

The protein resides in the cell inner membrane. It catalyses the reaction ATP + H2O + 4 H(+)(in) = ADP + phosphate + 5 H(+)(out). Functionally, produces ATP from ADP in the presence of a proton gradient across the membrane. The alpha chain is a regulatory subunit. The protein is ATP synthase subunit alpha of Gluconacetobacter diazotrophicus (strain ATCC 49037 / DSM 5601 / CCUG 37298 / CIP 103539 / LMG 7603 / PAl5).